Here is a 392-residue protein sequence, read N- to C-terminus: Succinate--CoA ligase [ADP-forming] subunit beta (392 aa).

Residues 9–248 form the ATP-grasp domain; it reads KDILRKFGVA…ISEEDPFEVE (240 aa). Residues K50, 57–59, E103, M106, and E111 contribute to the ATP site; that span reads GRG. Mg(2+)-binding residues include N203 and D217. Residues N268 and 325-327 each bind substrate; that span reads GIV.

It belongs to the succinate/malate CoA ligase beta subunit family. As to quaternary structure, heterotetramer of two alpha and two beta subunits. Requires Mg(2+) as cofactor.

It catalyses the reaction succinate + ATP + CoA = succinyl-CoA + ADP + phosphate. The enzyme catalyses GTP + succinate + CoA = succinyl-CoA + GDP + phosphate. It participates in carbohydrate metabolism; tricarboxylic acid cycle; succinate from succinyl-CoA (ligase route): step 1/1. Its function is as follows. Succinyl-CoA synthetase functions in the citric acid cycle (TCA), coupling the hydrolysis of succinyl-CoA to the synthesis of either ATP or GTP and thus represents the only step of substrate-level phosphorylation in the TCA. The beta subunit provides nucleotide specificity of the enzyme and binds the substrate succinate, while the binding sites for coenzyme A and phosphate are found in the alpha subunit. This is Succinate--CoA ligase [ADP-forming] subunit beta from Chlorobium phaeobacteroides (strain DSM 266 / SMG 266 / 2430).